The primary structure comprises 393 residues: Double-stranded RNA-binding protein 5 (393 aa).

DRBM domains follow at residues 1–70 and 87–155; these read MYKN…VLSS and IYKN…SLKK. Disordered stretches follow at residues 220–251 and 335–371; these read ASSS…KSSK and NPNL…QEKK. Over residues 347–361 the composition is skewed to polar residues; the sequence is VNEFTSSNNSCSVLN.

Heterodimer with DRB1, DRB2 or DRB4. Interacts with DCL1 and DCL3. Expressed in the shoot apical meristem (SAM).

Functionally, binds double-stranded RNA. May be involved in RNA-mediated silencing. The polypeptide is Double-stranded RNA-binding protein 5 (DRB5) (Arabidopsis thaliana (Mouse-ear cress)).